We begin with the raw amino-acid sequence, 223 residues long: Phosphoribosylformylglycinamidine synthase subunit PurQ (223 aa).

In terms of domain architecture, Glutamine amidotransferase type-1 spans 3–223; it reads FAVLVFPGSN…MVNSWREQNV (221 aa). Catalysis depends on Cys-85, which acts as the Nucleophile. Catalysis depends on residues His-193 and Glu-195.

In terms of assembly, part of the FGAM synthase complex composed of 1 PurL, 1 PurQ and 2 PurS subunits.

It is found in the cytoplasm. It carries out the reaction N(2)-formyl-N(1)-(5-phospho-beta-D-ribosyl)glycinamide + L-glutamine + ATP + H2O = 2-formamido-N(1)-(5-O-phospho-beta-D-ribosyl)acetamidine + L-glutamate + ADP + phosphate + H(+). The enzyme catalyses L-glutamine + H2O = L-glutamate + NH4(+). It participates in purine metabolism; IMP biosynthesis via de novo pathway; 5-amino-1-(5-phospho-D-ribosyl)imidazole from N(2)-formyl-N(1)-(5-phospho-D-ribosyl)glycinamide: step 1/2. In terms of biological role, part of the phosphoribosylformylglycinamidine synthase complex involved in the purines biosynthetic pathway. Catalyzes the ATP-dependent conversion of formylglycinamide ribonucleotide (FGAR) and glutamine to yield formylglycinamidine ribonucleotide (FGAM) and glutamate. The FGAM synthase complex is composed of three subunits. PurQ produces an ammonia molecule by converting glutamine to glutamate. PurL transfers the ammonia molecule to FGAR to form FGAM in an ATP-dependent manner. PurS interacts with PurQ and PurL and is thought to assist in the transfer of the ammonia molecule from PurQ to PurL. In Staphylococcus haemolyticus (strain JCSC1435), this protein is Phosphoribosylformylglycinamidine synthase subunit PurQ.